The chain runs to 347 residues: UDP-N-acetylenolpyruvoylglucosamine reductase (347 aa).

An FAD-binding PCMH-type domain is found at 15 to 187; it reads FGIEQTCSYL…TAIGLKLPKR (173 aa). Arg-163 is a catalytic residue. Catalysis depends on Ser-233, which acts as the Proton donor. Glu-328 is a catalytic residue.

Belongs to the MurB family. The cofactor is FAD.

Its subcellular location is the cytoplasm. It catalyses the reaction UDP-N-acetyl-alpha-D-muramate + NADP(+) = UDP-N-acetyl-3-O-(1-carboxyvinyl)-alpha-D-glucosamine + NADPH + H(+). It participates in cell wall biogenesis; peptidoglycan biosynthesis. In terms of biological role, cell wall formation. This is UDP-N-acetylenolpyruvoylglucosamine reductase from Vibrio parahaemolyticus serotype O3:K6 (strain RIMD 2210633).